The primary structure comprises 546 residues: Cytochrome P450 monooxygenase gloP (546 aa).

Residues 17-37 (TLSGGILTFLFIVVIAHFVLT) form a helical membrane-spanning segment. 3 N-linked (GlcNAc...) asparagine glycosylation sites follow: N189, N413, and N416. Position 492 (C492) interacts with heme.

Belongs to the cytochrome P450 family. Requires heme as cofactor.

Its subcellular location is the membrane. It functions in the pathway mycotoxin biosynthesis. In terms of biological role, cytochrome P450 monooxygenase; part of the gene cluster that mediates the biosynthesis of pneumocandins, lipohexapeptides of the echinocandin family that prevent fungal cell wall formation by non-competitive inhibition of beta-1,3-glucan synthase. The 10,12-dimethylmyristoyl side chain is synthesized by the reducing polyketide synthase gloL/GLPKS4. The thioesterase gloN/GLHYD exclusively interacts with gloL/GLPKS4 to maintain turnover of the polyketide side chain. The 10R,12S-dimethylmyristic acid is then transferred to the first thiolation domain of the nonribosomal peptide synthetase gloA/GLNRPS4 by the acyl-AMP ligase gloD/GLligase, followed by its acylation to L-ornithine to trigger elongation of the cyclic hexapeptide. L-ornithine, 4R-hydroxyl-L-proline (generated from L-proline by the dioxygenase gloF/GLOXY2), 3S-hydroxyl-L-homotyrosine (generated by gloG/GLHtyB, gloH/GLHtyA, gloI/GLHtyC, gloJ/GLHtyD and hydroxylated at C-3 by the dioxygenase gloM/GLOXY1), 3R-hydroxyl-L-glutamine (generated from L-glutamine probably by the dioxygenase gloE/GLOXY3) and 3S-hydroxyl-L-proline (generated from L-proline by the dioxygenase gloF/GLOXY2 to yield pneumocandin B0), or 3S-hydroxyl-4S-methyl-L-proline (generated from L-leucine by the dioxygenase gloC/GLOXY4 to yield pneumocandin A0) are sequentially added to the growing chain. The last C domain of gloA/GLNRPS4 is proposed to be responsible for cyclization by condensation to form the peptide bond between L-ornithine and 3S-hydroxyl-4S-methyl-L-proline (for pneumocandin A0) or 3S-hydroxyl-L-proline (for pneumocandin B0). Finally, the subsequent C-4 hydroxylation of 3S-hydroxyl-L-homotyrosine and L-ornithine dihydroxylation at C-4 and C-5 are performed by the cytochrome P450 monooxygenases gloP/GLP450-1 and gloO/GLP450-2, respectively. The chain is Cytochrome P450 monooxygenase gloP from Glarea lozoyensis (strain ATCC 20868 / MF5171).